The chain runs to 98 residues: Cystatin-A (98 aa).

The residue at position 1 (methionine 1) is an N-acetylmethionine. The Secondary area of contact motif lies at glutamine 46–glycine 50.

The protein belongs to the cystatin family. As to expression, expressed in the skin throughout the epidermis.

The protein localises to the cytoplasm. In terms of biological role, this is an intracellular thiol proteinase inhibitor. Has an important role in desmosome-mediated cell-cell adhesion in the lower levels of the epidermis. The chain is Cystatin-A (CSTA) from Homo sapiens (Human).